Reading from the N-terminus, the 358-residue chain is MIGKIKKFNFKSLFILNTFALIVTSYLFNNFIFTGVYILFFFISIFITKNGLKIIKKFNFLQNIRDEGPTNHFKKSDTPTMGGIFMIIPFLILLLIITINLSSLKLILLLLTVFGFFITGFLDDYLSIKKRENTGLKTKEKFILQSVISIIFILLAYEKNLISPLITISDSWAINMNIFILPVAFLVLVGISNSVNLTDGLDGLAAGCSGIVFYGLGTEILLKGQQELFVFSILCFSMSGICLGFLKYNSYPAKIFMGDTGSLSIGAILGSIALLTNSIFTLSIFSGIFIIESLSVIIQVGFFKITKKLFHRGKRIFLMAPLHHHFELKGVKEEKIVENFWKINILLVILGIVLKINL.

10 helical membrane passes run 13 to 47 (LFIL…SIFI), 81 to 101 (MGGI…TINL), 106 to 126 (LILL…DDYL), 148 to 168 (ISII…LITI), 171 to 191 (SWAI…LVGI), 201 to 221 (LDGL…TEIL), 228 to 248 (LFVF…FLKY), 255 to 275 (IFMG…IALL), 278 to 298 (SIFT…SVII), and 336 to 356 (IVEN…VLKI).

Belongs to the glycosyltransferase 4 family. MraY subfamily. Mg(2+) serves as cofactor.

The protein resides in the cell inner membrane. The catalysed reaction is UDP-N-acetyl-alpha-D-muramoyl-L-alanyl-gamma-D-glutamyl-meso-2,6-diaminopimeloyl-D-alanyl-D-alanine + di-trans,octa-cis-undecaprenyl phosphate = di-trans,octa-cis-undecaprenyl diphospho-N-acetyl-alpha-D-muramoyl-L-alanyl-D-glutamyl-meso-2,6-diaminopimeloyl-D-alanyl-D-alanine + UMP. It functions in the pathway cell wall biogenesis; peptidoglycan biosynthesis. Its function is as follows. Catalyzes the initial step of the lipid cycle reactions in the biosynthesis of the cell wall peptidoglycan: transfers peptidoglycan precursor phospho-MurNAc-pentapeptide from UDP-MurNAc-pentapeptide onto the lipid carrier undecaprenyl phosphate, yielding undecaprenyl-pyrophosphoryl-MurNAc-pentapeptide, known as lipid I. The chain is Phospho-N-acetylmuramoyl-pentapeptide-transferase from Prochlorococcus marinus (strain MIT 9301).